We begin with the raw amino-acid sequence, 721 residues long: Polyribonucleotide nucleotidyltransferase (721 aa).

2 residues coordinate Mg(2+): Asp485 and Asp491. Residues 552–611 enclose the KH domain; the sequence is PKIYIVKIHPDKIREIIGPGGKVIRELQAMSNTRIEVDDSGTVKIAASTEEEARIAIKAV. An S1 motif domain is found at 621-689; that stretch reads GEIYEGEVVR…PEGKIRLSRK (69 aa). The tract at residues 687 to 721 is disordered; it reads SRKALLPAPEKGEEDEKSAPRSRRPGGNSDRRNNR.

This sequence belongs to the polyribonucleotide nucleotidyltransferase family. The cofactor is Mg(2+).

It localises to the cytoplasm. It carries out the reaction RNA(n+1) + phosphate = RNA(n) + a ribonucleoside 5'-diphosphate. Functionally, involved in mRNA degradation. Catalyzes the phosphorolysis of single-stranded polyribonucleotides processively in the 3'- to 5'-direction. The sequence is that of Polyribonucleotide nucleotidyltransferase from Desulfosudis oleivorans (strain DSM 6200 / JCM 39069 / Hxd3) (Desulfococcus oleovorans).